Here is a 316-residue protein sequence, read N- to C-terminus: 4-hydroxy-3-methylbut-2-enyl diphosphate reductase (316 aa).

Cys12 provides a ligand contact to [4Fe-4S] cluster. The (2E)-4-hydroxy-3-methylbut-2-enyl diphosphate site is built by His41 and His74. The dimethylallyl diphosphate site is built by His41 and His74. Positions 41 and 74 each coordinate isopentenyl diphosphate. Cys96 provides a ligand contact to [4Fe-4S] cluster. Residue His124 coordinates (2E)-4-hydroxy-3-methylbut-2-enyl diphosphate. Position 124 (His124) interacts with dimethylallyl diphosphate. An isopentenyl diphosphate-binding site is contributed by His124. Glu126 functions as the Proton donor in the catalytic mechanism. Thr167 is a (2E)-4-hydroxy-3-methylbut-2-enyl diphosphate binding site. Cys197 contributes to the [4Fe-4S] cluster binding site. (2E)-4-hydroxy-3-methylbut-2-enyl diphosphate-binding residues include Ser225, Ser226, Asn227, and Ser269. Dimethylallyl diphosphate is bound by residues Ser225, Ser226, Asn227, and Ser269. 4 residues coordinate isopentenyl diphosphate: Ser225, Ser226, Asn227, and Ser269.

This sequence belongs to the IspH family. Homodimer. The cofactor is [4Fe-4S] cluster.

The catalysed reaction is isopentenyl diphosphate + 2 oxidized [2Fe-2S]-[ferredoxin] + H2O = (2E)-4-hydroxy-3-methylbut-2-enyl diphosphate + 2 reduced [2Fe-2S]-[ferredoxin] + 2 H(+). It carries out the reaction dimethylallyl diphosphate + 2 oxidized [2Fe-2S]-[ferredoxin] + H2O = (2E)-4-hydroxy-3-methylbut-2-enyl diphosphate + 2 reduced [2Fe-2S]-[ferredoxin] + 2 H(+). Its pathway is isoprenoid biosynthesis; dimethylallyl diphosphate biosynthesis; dimethylallyl diphosphate from (2E)-4-hydroxy-3-methylbutenyl diphosphate: step 1/1. The protein operates within isoprenoid biosynthesis; isopentenyl diphosphate biosynthesis via DXP pathway; isopentenyl diphosphate from 1-deoxy-D-xylulose 5-phosphate: step 6/6. In terms of biological role, catalyzes the conversion of 1-hydroxy-2-methyl-2-(E)-butenyl 4-diphosphate (HMBPP) into a mixture of isopentenyl diphosphate (IPP) and dimethylallyl diphosphate (DMAPP). Acts in the terminal step of the DOXP/MEP pathway for isoprenoid precursor biosynthesis. This chain is 4-hydroxy-3-methylbut-2-enyl diphosphate reductase, found in Enterobacter sp. (strain 638).